The sequence spans 623 residues: MSHIMVNVAWPYANGPRHIGHVAGFGVPSDVYARYQRMKGNDVLMVSGTDEHGTPILVEADKEGVTPQELANRYNRVIANDLCNLGLSYDLFTRTTTKNHEHVVQEMFRQCLANGYIYKGTQKVAISPSTGRTLPDRYIEGECPICHAQGARGDQCDNCGNELDPDELINPVSKINGETPIFEETEHYFLDLPALAEANLAWLKTRKGWRPNVLNFSIGLFKEVKPRAITRDIDWGIPVPVPGWIDNPNKRLYVWFDAVIGYLSASIEWARRSGDPEAWRAWWNDPATPGYYFMGKDNITFHSQIWPSEMLAYNGEGSKGGEPGELGRLDLPEQVVASEFMTMEGKKFSSSRGIVIYVKDILSRYPVDAVRYYISAAGPESSDSDFTWAEFVRQNNEVLAASWGNLVNRVANLIAKNFGQIPPIVEEKMTDEDRALLAQSSAAFDTVGALIEQHRQKSALNDAMSLVGDINKYISATEPWKIKDDPERLGTVLHVAAQAVSDANHLLAPFLPHSSQKVWEALGGEGTFSPLPHIEEVNDLDDPEFTYPVITGKYVLGENVHPWKSEPIVVGAPVVKPTPIFAKIPPEAVDEELARFDADLKARREAEQARLDAEKAKLAAGEE.

The short motif at 11-21 (PYANGPRHIGH) is the 'HIGH' region element. Positions 143, 146, 156, and 159 each coordinate Zn(2+). The short motif at 347–351 (KFSSS) is the 'KMSKS' region element. Ser-350 is an ATP binding site.

It belongs to the class-I aminoacyl-tRNA synthetase family. MetG type 1 subfamily. Monomer. The cofactor is Zn(2+).

It is found in the cytoplasm. The enzyme catalyses tRNA(Met) + L-methionine + ATP = L-methionyl-tRNA(Met) + AMP + diphosphate. Functionally, is required not only for elongation of protein synthesis but also for the initiation of all mRNA translation through initiator tRNA(fMet) aminoacylation. This chain is Methionine--tRNA ligase, found in Bifidobacterium animalis subsp. lactis (strain AD011).